We begin with the raw amino-acid sequence, 349 residues long: Isopentenyl-diphosphate delta-isomerase (349 aa).

Position 6–7 (6–7 (RK)) interacts with substrate. FMN contacts are provided by residues 62–64 (AMT), Ser-93, and Asn-122. Gln-152 contacts substrate. Glu-153 contributes to the Mg(2+) binding site. FMN is bound by residues Lys-184, Thr-214, 258–259 (GG), and 280–281 (AG).

It belongs to the IPP isomerase type 2 family. In terms of assembly, homooctamer. Dimer of tetramers. It depends on FMN as a cofactor. NADPH is required as a cofactor. The cofactor is Mg(2+).

It is found in the cytoplasm. The catalysed reaction is isopentenyl diphosphate = dimethylallyl diphosphate. Functionally, involved in the biosynthesis of isoprenoids. Catalyzes the 1,3-allylic rearrangement of the homoallylic substrate isopentenyl (IPP) to its allylic isomer, dimethylallyl diphosphate (DMAPP). The sequence is that of Isopentenyl-diphosphate delta-isomerase from Bacillus cereus (strain AH187).